Here is a 378-residue protein sequence, read N- to C-terminus: UPF0725 protein At1g23970 (378 aa).

It belongs to the UPF0725 (EMB2204) family.

This Arabidopsis thaliana (Mouse-ear cress) protein is UPF0725 protein At1g23970.